We begin with the raw amino-acid sequence, 359 residues long: MSTENTLSVADLARENVRNLVPYQSARRLGGNGDVWLNANEFPTAVEFQLTQQTLNRYPECQPKAVIENYAQYAGVKPEQVLVSRGADEGIELVIRAFCEPGKDAILYCPPTYGMYSVSAETIGVERRTVPALENWQLDLQGISDNLDGTKVVFVCSPNNPTGQLINPQDLRTLLELTRGKAIVVADEAYIEFCPQATLTGWLVEYPHLVILRTLSKAFALAGLRCGFTLANEEVINLLLKVIAPYPLSTPVADIAAQALCPQGINAMRDRVAQTVQERQYLVNALQQTACVEHVFDSETNYILARFTASSSVFKSLWDQGIILRDQNKQPSLSGCLRITVGTRQENQRVIDALRAEPV.

An N6-(pyridoxal phosphate)lysine modification is found at lysine 217.

The protein belongs to the class-II pyridoxal-phosphate-dependent aminotransferase family. Histidinol-phosphate aminotransferase subfamily. Homodimer. Requires pyridoxal 5'-phosphate as cofactor.

The catalysed reaction is L-histidinol phosphate + 2-oxoglutarate = 3-(imidazol-4-yl)-2-oxopropyl phosphate + L-glutamate. It functions in the pathway amino-acid biosynthesis; L-histidine biosynthesis; L-histidine from 5-phospho-alpha-D-ribose 1-diphosphate: step 7/9. This chain is Histidinol-phosphate aminotransferase (hisC), found in Salmonella typhimurium (strain LT2 / SGSC1412 / ATCC 700720).